Reading from the N-terminus, the 1196-residue chain is DNA-directed RNA polymerase subunit 2 (1196 aa).

A disordered region spans residues 1074 to 1095 (SRARGPTQLLTRQAPEGRSRDG). The C4-type zinc-finger motif lies at 1133–1154 (CDSCGQFAHKVPEKKYYTCTGC).

This sequence belongs to the RNA polymerase beta chain family.

It is found in the virion. It catalyses the reaction RNA(n) + a ribonucleoside 5'-triphosphate = RNA(n+1) + diphosphate. In terms of biological role, DNA-dependent RNA polymerase catalyzes the transcription of DNA into RNA using the four ribonucleoside triphosphates as substrates. The chain is DNA-directed RNA polymerase subunit 2 (RPO2) from Acanthamoeba polyphaga mimivirus (APMV).